The sequence spans 254 residues: Thiazole synthase (254 aa).

Lysine 95 (schiff-base intermediate with DXP) is an active-site residue. 1-deoxy-D-xylulose 5-phosphate-binding positions include glycine 156, 182-183 (AG), and 204-205 (NT).

The protein belongs to the ThiG family. As to quaternary structure, homotetramer. Forms heterodimers with either ThiH or ThiS.

The protein localises to the cytoplasm. It catalyses the reaction [ThiS sulfur-carrier protein]-C-terminal-Gly-aminoethanethioate + 2-iminoacetate + 1-deoxy-D-xylulose 5-phosphate = [ThiS sulfur-carrier protein]-C-terminal Gly-Gly + 2-[(2R,5Z)-2-carboxy-4-methylthiazol-5(2H)-ylidene]ethyl phosphate + 2 H2O + H(+). The protein operates within cofactor biosynthesis; thiamine diphosphate biosynthesis. Catalyzes the rearrangement of 1-deoxy-D-xylulose 5-phosphate (DXP) to produce the thiazole phosphate moiety of thiamine. Sulfur is provided by the thiocarboxylate moiety of the carrier protein ThiS. In vitro, sulfur can be provided by H(2)S. The chain is Thiazole synthase from Shewanella oneidensis (strain ATCC 700550 / JCM 31522 / CIP 106686 / LMG 19005 / NCIMB 14063 / MR-1).